Consider the following 246-residue polypeptide: Pyridoxine 5'-phosphate synthase (246 aa).

3-amino-2-oxopropyl phosphate is bound by residues asparagine 8 and arginine 19. Catalysis depends on histidine 44, which acts as the Proton acceptor. The 1-deoxy-D-xylulose 5-phosphate site is built by arginine 46 and histidine 51. Glutamate 76 serves as the catalytic Proton acceptor. Residue threonine 106 participates in 1-deoxy-D-xylulose 5-phosphate binding. Histidine 198 acts as the Proton donor in catalysis. 3-amino-2-oxopropyl phosphate is bound by residues aspartate 199 and 221–222 (GH).

This sequence belongs to the PNP synthase family. In terms of assembly, homooctamer; tetramer of dimers.

It is found in the cytoplasm. The catalysed reaction is 3-amino-2-oxopropyl phosphate + 1-deoxy-D-xylulose 5-phosphate = pyridoxine 5'-phosphate + phosphate + 2 H2O + H(+). Its pathway is cofactor biosynthesis; pyridoxine 5'-phosphate biosynthesis; pyridoxine 5'-phosphate from D-erythrose 4-phosphate: step 5/5. Its function is as follows. Catalyzes the complicated ring closure reaction between the two acyclic compounds 1-deoxy-D-xylulose-5-phosphate (DXP) and 3-amino-2-oxopropyl phosphate (1-amino-acetone-3-phosphate or AAP) to form pyridoxine 5'-phosphate (PNP) and inorganic phosphate. The protein is Pyridoxine 5'-phosphate synthase of Mesorhizobium japonicum (strain LMG 29417 / CECT 9101 / MAFF 303099) (Mesorhizobium loti (strain MAFF 303099)).